Here is a 575-residue protein sequence, read N- to C-terminus: Putative diflavin flavoprotein A 4 (575 aa).

A zinc metallo-hydrolase region spans residues 41–234; the sequence is QRGTTANSYL…LGARSYAPGH (194 aa). In terms of domain architecture, Flavodoxin-like spans 263-405; the sequence is VALLYTSAYG…AGATFAQTLK (143 aa). Residues 429 to 575 form a flavodoxin-reductase-like region; that stretch reads VGRIIGSLCV…AVEHRKSGSH (147 aa).

The protein in the N-terminal section; belongs to the zinc metallo-hydrolase group 3 family. It in the C-terminal section; belongs to the flavodoxin reductase family. Fe cation serves as cofactor.

Its function is as follows. Mediates electron transfer from NADH to oxygen, reducing it to water. This modular protein has 3 redox cofactors, in other organisms the same activity requires 2 or 3 proteins. This chain is Putative diflavin flavoprotein A 4 (dfa4), found in Nostoc sp. (strain PCC 7120 / SAG 25.82 / UTEX 2576).